The chain runs to 353 residues: Protein RecA (353 aa).

Residue 67 to 74 (GPESSGKT) participates in ATP binding.

The protein belongs to the RecA family.

The protein resides in the cytoplasm. Functionally, can catalyze the hydrolysis of ATP in the presence of single-stranded DNA, the ATP-dependent uptake of single-stranded DNA by duplex DNA, and the ATP-dependent hybridization of homologous single-stranded DNAs. It interacts with LexA causing its activation and leading to its autocatalytic cleavage. The chain is Protein RecA from Salmonella paratyphi A (strain ATCC 9150 / SARB42).